The chain runs to 154 residues: Transcriptional repressor NrdR (154 aa).

A disordered region spans residues M1–G22. A zinc finger spans residues C3 to C34. A compositionally biased stretch (basic and acidic residues) spans A7–G22. The ATP-cone domain occupies M49–D139.

The protein belongs to the NrdR family. It depends on Zn(2+) as a cofactor.

Its function is as follows. Negatively regulates transcription of bacterial ribonucleotide reductase nrd genes and operons by binding to NrdR-boxes. This is Transcriptional repressor NrdR from Rhizorhabdus wittichii (strain DSM 6014 / CCUG 31198 / JCM 15750 / NBRC 105917 / EY 4224 / RW1) (Sphingomonas wittichii).